Here is a 438-residue protein sequence, read N- to C-terminus: Glutamyl-tRNA reductase (438 aa).

Substrate contacts are provided by residues 49–52 (TCNR), S109, 114–116 (EQQ), and Q120. C50 acts as the Nucleophile in catalysis. Position 191–196 (191–196 (GAGAMA)) interacts with NADP(+).

This sequence belongs to the glutamyl-tRNA reductase family. Homodimer.

The catalysed reaction is (S)-4-amino-5-oxopentanoate + tRNA(Glu) + NADP(+) = L-glutamyl-tRNA(Glu) + NADPH + H(+). Its pathway is porphyrin-containing compound metabolism; protoporphyrin-IX biosynthesis; 5-aminolevulinate from L-glutamyl-tRNA(Glu): step 1/2. Catalyzes the NADPH-dependent reduction of glutamyl-tRNA(Glu) to glutamate 1-semialdehyde (GSA). The polypeptide is Glutamyl-tRNA reductase (Corynebacterium diphtheriae (strain ATCC 700971 / NCTC 13129 / Biotype gravis)).